The chain runs to 283 residues: Large ribosomal subunit protein uL2 (283 aa).

Disordered stretches follow at residues 1–59 (MSIK…GGHK) and 222–283 (RGVA…TGGQ).

Belongs to the universal ribosomal protein uL2 family. As to quaternary structure, part of the 50S ribosomal subunit. Forms a bridge to the 30S subunit in the 70S ribosome.

Its function is as follows. One of the primary rRNA binding proteins. Required for association of the 30S and 50S subunits to form the 70S ribosome, for tRNA binding and peptide bond formation. It has been suggested to have peptidyltransferase activity; this is somewhat controversial. Makes several contacts with the 16S rRNA in the 70S ribosome. This Salinibacter ruber (strain DSM 13855 / M31) protein is Large ribosomal subunit protein uL2.